The chain runs to 522 residues: E3 ubiquitin-protein ligase DMA2 (522 aa).

2 disordered regions span residues 1-56 (MYTP…RPAS) and 69-92 (QNSQ…PSNS). Positions 14-35 (APTSSMTSNSSSASNANTTSSS) are enriched in low complexity. The segment covering 36–49 (GINPRNRASGTPSN) has biased composition (polar residues). Serine 206 carries the phosphoserine modification. Glycyl lysine isopeptide (Lys-Gly) (interchain with G-Cter in ubiquitin) cross-links involve residues lysine 211, lysine 256, lysine 258, lysine 288, lysine 310, lysine 333, lysine 343, lysine 346, lysine 366, lysine 406, lysine 412, and lysine 423. The region spanning 295–358 (LVIGRYTERV…SGTFLNHQRL (64 aa)) is the FHA domain. Residues 433-477 (CSICLCKIKPCQAIFISPCAHSWHFRCVRRLVMLSYPQFVCPNCR) form an RING-type; atypical zinc finger.

Belongs to the DMA1 family. In terms of processing, UBC4-dependent autoubiquitination occurs at Lys-211, Lys-258, Lys-288, Lys-310, Lys-333, Lys-343, Lys-346, Lys-366, Lys-406, Lys-412 and Lys-423. UBC13/MMS2-dependent autoubiquitination occurs at Lys-258, Lys-310, Lys-346 and Lys-366. Lys-211, Lys-256, Lys-288, Lys-310, Lys-343, Lys-258, Lys-366 and Lys-412 are also ubiquitinated in trans by DMA1 E3 ligase in association with UBC4.

Its subcellular location is the cytoplasm. The enzyme catalyses S-ubiquitinyl-[E2 ubiquitin-conjugating enzyme]-L-cysteine + [acceptor protein]-L-lysine = [E2 ubiquitin-conjugating enzyme]-L-cysteine + N(6)-ubiquitinyl-[acceptor protein]-L-lysine.. Functionally, E3 ubiquitin-protein ligase which functions in cell cycle retarding in conjunction with the UBC4 and UBC13/MMS2 complex, 2 E2 ubiquitin conjugating enzymes. Involved in nutritional control of the cell cycle. Required for proper spindle positioning, likely regulating septin ring deposition at the bud neck. This chain is E3 ubiquitin-protein ligase DMA2 (DMA2), found in Saccharomyces cerevisiae (strain YJM789) (Baker's yeast).